Reading from the N-terminus, the 297-residue chain is GTPase Era (297 aa).

One can recognise an Era-type G domain in the interval 3-171; that stretch reads KSGFVSIVGR…IKVIQNYLEE (169 aa). Positions 11–18 are G1; it reads GRPNVGKS. Residue 11–18 participates in GTP binding; that stretch reads GRPNVGKS. The tract at residues 37 to 41 is G2; that stretch reads QTTRN. A G3 region spans residues 58 to 61; the sequence is DTPG. Residues 58–62 and 120–123 contribute to the GTP site; these read DTPGI and NKID. The interval 120–123 is G4; sequence NKID. The tract at residues 150-152 is G5; that stretch reads ISA. Positions 194 to 280 constitute a KH type-2 domain; sequence IREKVLHYLN…NLQLWVKVKE (87 aa).

The protein belongs to the TRAFAC class TrmE-Era-EngA-EngB-Septin-like GTPase superfamily. Era GTPase family. Monomer.

The protein localises to the cytoplasm. Its subcellular location is the cell membrane. An essential GTPase that binds both GDP and GTP, with rapid nucleotide exchange. Plays a role in 16S rRNA processing and 30S ribosomal subunit biogenesis and possibly also in cell cycle regulation and energy metabolism. The chain is GTPase Era from Clostridioides difficile (strain 630) (Peptoclostridium difficile).